A 313-amino-acid polypeptide reads, in one-letter code: tRNA dimethylallyltransferase (313 aa).

ATP is bound at residue 8 to 15 (GPTGTGKS). 10–15 (TGTGKS) lines the substrate pocket.

This sequence belongs to the IPP transferase family. In terms of assembly, monomer. Mg(2+) is required as a cofactor.

The catalysed reaction is adenosine(37) in tRNA + dimethylallyl diphosphate = N(6)-dimethylallyladenosine(37) in tRNA + diphosphate. In terms of biological role, catalyzes the transfer of a dimethylallyl group onto the adenine at position 37 in tRNAs that read codons beginning with uridine, leading to the formation of N6-(dimethylallyl)adenosine (i(6)A). In Mycolicibacterium gilvum (strain PYR-GCK) (Mycobacterium gilvum (strain PYR-GCK)), this protein is tRNA dimethylallyltransferase.